The chain runs to 362 residues: E3 ubiquitin-protein ligase TM129 (362 aa).

The Lumenal portion of the chain corresponds to 1–6 (MESPAV). The helical transmembrane segment at 7–27 (TFTLAYVVFSVCFVFTPNEFH) threads the bilayer. Topologically, residues 28–56 (SAGITVQNLLSGWLGSEDVAFVHYHIRRS) are cytoplasmic. The chain crosses the membrane as a helical span at residues 57–77 (SATLLAHSLLPMGYFIGMCFA). Topologically, residues 78–94 (APEKELYNVHKAADGWK) are lumenal. The helical transmembrane segment at 95 to 115 (VFVLMAVLLPIATSILAFYWS) threads the bilayer. At 116–362 (QKRWSNHPLA…FCIVDVCIVR (247 aa)) the chain is on the cytoplasmic side. The RING-type; degenerate zinc-finger motif lies at 285–350 (CIGCMQTNAN…SSQVPCPTCR (66 aa)).

It belongs to the TMEM129 family. As to quaternary structure, integral component of ER-resident dislocation complexes.

It is found in the endoplasmic reticulum membrane. The catalysed reaction is S-ubiquitinyl-[E2 ubiquitin-conjugating enzyme]-L-cysteine + [acceptor protein]-L-lysine = [E2 ubiquitin-conjugating enzyme]-L-cysteine + N(6)-ubiquitinyl-[acceptor protein]-L-lysine.. The protein operates within protein modification; protein ubiquitination. Its function is as follows. E3 ubiquitin-protein ligase involved in ER-associated protein degradation, preferentially associates with the E2 enzyme UBE2J2. This is E3 ubiquitin-protein ligase TM129 (tmem129) from Xenopus laevis (African clawed frog).